Here is a 492-residue protein sequence, read N- to C-terminus: Putative heme-binding protein VNG_2021C (492 aa).

Histidine 177 serves as a coordination point for heme. The interval 253-301 (AGERVPAPEGGADAHGEGERTHHHGDSDHHDGDDGEQHHHSTGDEADDG) is disordered. Over residues 264–301 (ADAHGEGERTHHHGDSDHHDGDDGEQHHHSTGDEADDG) the composition is skewed to basic and acidic residues. An ABM domain is found at 402–490 (GTMGMFYETK…VLADRPRHVF (89 aa)).

This sequence in the N-terminal section; belongs to the ChdC family.

The chain is Putative heme-binding protein VNG_2021C from Halobacterium salinarum (strain ATCC 700922 / JCM 11081 / NRC-1) (Halobacterium halobium).